A 153-amino-acid polypeptide reads, in one-letter code: MVVDLPRYLPLLLLLELWEPMYLLCSQPKGLSRAHWFEIQHIQTSRQPCNTAMRGVNNYTQHCKQINTFLHESFQNVAATCSLHNITCKNGRKNCHESAEPVKMTDCSHTGGAYPNCRYSSDKQYKFFIVACEHPKKEDPPYQLVPVHLDKIV.

The first 27 residues, 1–27 (MVVDLPRYLPLLLLLELWEPMYLLCSQ), serve as a signal peptide directing secretion. His41 acts as the Proton acceptor in catalysis. 4 disulfides stabilise this stretch: Cys49/Cys107, Cys63/Cys117, Cys81/Cys132, and Cys88/Cys95. The N-linked (GlcNAc...) asparagine glycan is linked to Asn58. A substrate-binding site is contributed by 64–68 (KQINT). An N-linked (GlcNAc...) asparagine glycan is attached at Asn85. Lys89 serves as a coordination point for substrate. His148 serves as the catalytic Proton donor.

Belongs to the pancreatic ribonuclease family. Interacts (via N-terminus) with bacterial lipopolysaccharide (LPS). Highly expressed in spleen (at protein level). Has little or no expression in healthy kidneys (at protein level). Detected at high levels in infected kidneys (at protein level). Expressed at low levels in bladder. Also detected in skeletal muscle, heart and bone marrow.

The protein resides in the secreted. It localises to the lysosome. The protein localises to the cytoplasmic granule. Its function is as follows. Ribonuclease which shows a preference for the pyrimidines uridine and cytosine. Has potent antibacterial activity against a range of Gram-positive and Gram-negative bacteria, including P.aeruginosa, A.baumanii, M.luteus, S.aureus, E.faecalis, E.faecium, S.saprophyticus and E.coli. Causes loss of bacterial membrane integrity, and also promotes agglutination of Gram-negative bacteria. Probably contributes to urinary tract sterility. Bactericidal activity is independent of RNase activity. The polypeptide is Ribonuclease K6 (Rnase6) (Mus musculus (Mouse)).